The sequence spans 483 residues: MVQGTTSDAGKSTLVAGLCRVLYRRGVRVAPFKPQNMALNSAVTSDGGEIGRAQAVQAQACGLLPHTDMNPVLLKPNTDTGCQVIIHGKVLANLEAMAYHAYKPKAREAVLASWQRLREQYECIIVEGAGSPAEINLRQNDIANMGFAEAADCPVILIADIDRGGVFAHIVGTLALLSESERKRIIGFVINRFRGDIALLQSGLDWLQQETGIPVLGVLPYLRNLHLEAEDAVAKDTPDKPQTWLRVIAPVLPHVSNHTDMDALRMHPHVDFQFIELNEPVPPADLIILPGSKNVRGDLAVLASHGWRDKISRHLRYGGKLMGICGGFQMLGRKIHDPHGLEGDAGSSDGFGWLDMETTLTKEKHLKEVEGKLTFADAVVTGYEIHMGVSSGPALERPLLHIGTQAEGALSEDGQIAGTYLHGLFDHAEATQAWLNWAGYSQLKQAQETIAHYDYLALREASLERLADEVELHLDWNRLQSYL.

The GATase cobBQ-type domain maps to 244–430 (WLRVIAPVLP…LHGLFDHAEA (187 aa)). The active-site Nucleophile is the Cys-325. His-422 is a catalytic residue.

Belongs to the CobB/CobQ family. CobQ subfamily.

Its pathway is cofactor biosynthesis; adenosylcobalamin biosynthesis. Functionally, catalyzes amidations at positions B, D, E, and G on adenosylcobyrinic A,C-diamide. NH(2) groups are provided by glutamine, and one molecule of ATP is hydrogenolyzed for each amidation. This Methylobacillus flagellatus (strain ATCC 51484 / DSM 6875 / VKM B-1610 / KT) protein is Cobyric acid synthase.